Consider the following 3005-residue polypeptide: Highly reducing polyketide synthase AFT9-1 (3005 aa).

A Ketosynthase family 3 (KS3) domain is found at 1–337 (MDPQQRLLLE…GTNAHAILER (337 aa)). Catalysis depends on for beta-ketoacyl synthase activity residues Cys-87, His-222, and His-260. Positions 437 to 751 (VFTGQGAQWP…SYMSALVRGS (315 aa)) are malonyl-CoA:ACP transacylase (MAT) domain. Residues 821–936 (HDLLGLKMTD…GSVEVKYAAA (116 aa)) are N-terminal hotdog fold. The dehydratase (DH) domain stretch occupies residues 821–1114 (HDLLGLKMTD…SGLELRRLAP (294 aa)). The PKS/mFAS DH domain maps to 821-1118 (HDLLGLKMTD…LRRLAPTGQP (298 aa)). His-853 acts as the Proton acceptor; for dehydratase activity in catalysis. Residues 963-1118 (IEKISSQELY…LRRLAPTGQP (156 aa)) form a C-terminal hotdog fold region. Asp-1028 functions as the Proton donor; for dehydratase activity in the catalytic mechanism. Residues 1259 to 1445 (ADDSSKRCYD…MRKASLNMQL (187 aa)) are methyltransferase (CMet) domain. An enoyl reductase (ER) (ER) domain region spans residues 1683–1985 (EFMKMPVFTE…QHHRNESTVL (303 aa)). Positions 2008–2191 (ATYVVSGGRG…YMSLNVGTIE (184 aa)) are ketoreductase (KR) domain. A Carrier domain is found at 2293–2375 (TRDFEKISQL…SLGAKVASRS (83 aa)). Ser-2335 is subject to O-(pantetheine 4'-phosphoryl)serine.

It functions in the pathway mycotoxin biosynthesis. Its function is as follows. Highly reducing polyketide synthase; part of the gene clusters that mediate the biosynthesis of the host-selective toxins (HSTs) AF-toxins responsible for Alternaria black spot of strawberry disease by the strawberry pathotype. AF-toxin I and III are valine derivatives of 2,3-dyhydroxy-isovaleric acid and 2-hydroxy-isovaleric acid respectively, while AF II is an isoleucine derivative of 2-hydroxy-valeric acid. These derivatives are bound to a 9,10-epoxy-8-hydroxy-9-methyl-decatrienoic acid (EDA) moiety. On cellular level, AF-toxins affect plasma membrane of susceptible cells and cause a sudden increase in loss of K(+) after a few minutes of toxin treatment. The aldo-keto reductase AFTS1 catalyzes the conversion of 2-keto-isovaleric acid (2-KIV) to 2-hydroxy-isovaleric acid (2-HIV) by reduction of its ketone to an alcohol. The acyl-CoA ligase AFT1, the hydrolase AFT2 and the enoyl-CoA hydratases AFT3 and AFT6, but also the polyketide synthase AFT9, the acyl-CoA dehydrogenase AFT10, the cytochrome P450 monooxygenase AFT11 and the oxidoreductase AFT12 are all involved in the biosynthesis of the AK-, AF- and ACT-toxin common EDA structural moiety. The exact function of each enzyme, and of additional enzymes identified within the AF-toxin clusters have still to be determined. This chain is Highly reducing polyketide synthase AFT9-1, found in Alternaria alternata (Alternaria rot fungus).